The sequence spans 116 residues: Large ribosomal subunit protein bL19 (116 aa).

This sequence belongs to the bacterial ribosomal protein bL19 family.

In terms of biological role, this protein is located at the 30S-50S ribosomal subunit interface and may play a role in the structure and function of the aminoacyl-tRNA binding site. The chain is Large ribosomal subunit protein bL19 from Lactobacillus gasseri (strain ATCC 33323 / DSM 20243 / BCRC 14619 / CIP 102991 / JCM 1131 / KCTC 3163 / NCIMB 11718 / NCTC 13722 / AM63).